Here is a 320-residue protein sequence, read N- to C-terminus: Variant surface glycoprotein ILTAT 1.2 (320 aa).

3 N-linked (GlcNAc...) asparagine glycosylation sites follow: Asn146, Asn282, and Asn295. A disordered region spans residues 297 to 320 (TKATENGVPVAQTQTGGSETTTEK). Over residues 308–320 (QTQTGGSETTTEK) the composition is skewed to low complexity.

The protein localises to the cell membrane. VSG forms a coat on the surface of the parasite. The trypanosome evades the immune response of the host by expressing a series of antigenically distinct VSGs from an estimated 1000 VSG genes. This is Variant surface glycoprotein ILTAT 1.2 from Trypanosoma brucei brucei.